The primary structure comprises 311 residues: Malate dehydrogenase (311 aa).

NAD(+) contacts are provided by residues Gly-7–Gly-13 and Asp-34. Substrate contacts are provided by Arg-81 and Arg-87. NAD(+)-binding positions include Asn-94 and Ile-117–Asn-119. Positions 119 and 153 each coordinate substrate. His-177 serves as the catalytic Proton acceptor. Met-227 lines the NAD(+) pocket.

This sequence belongs to the LDH/MDH superfamily. MDH type 1 family. In terms of assembly, homodimer.

The enzyme catalyses (S)-malate + NAD(+) = oxaloacetate + NADH + H(+). Its function is as follows. Catalyzes the reversible oxidation of malate to oxaloacetate. This Aeromonas hydrophila subsp. hydrophila (strain ATCC 7966 / DSM 30187 / BCRC 13018 / CCUG 14551 / JCM 1027 / KCTC 2358 / NCIMB 9240 / NCTC 8049) protein is Malate dehydrogenase.